We begin with the raw amino-acid sequence, 329 residues long: Pantothenate kinase (329 aa).

Residues 1–22 (MPAQGPSHGELPPADAGRESSP) are disordered. An ATP-binding site is contributed by 107–114 (GSVAVGKS).

It belongs to the prokaryotic pantothenate kinase family.

The protein localises to the cytoplasm. The enzyme catalyses (R)-pantothenate + ATP = (R)-4'-phosphopantothenate + ADP + H(+). Its pathway is cofactor biosynthesis; coenzyme A biosynthesis; CoA from (R)-pantothenate: step 1/5. The chain is Pantothenate kinase from Nocardioides sp. (strain ATCC BAA-499 / JS614).